A 152-amino-acid polypeptide reads, in one-letter code: Superoxide dismutase [Cu-Zn] (152 aa).

Cu cation-binding residues include His44, His46, and His61. Residues His61, His69, His78, and Asp81 each coordinate Zn(2+). His118 provides a ligand contact to Cu cation.

It belongs to the Cu-Zn superoxide dismutase family. In terms of assembly, homodimer. The cofactor is Cu cation. Requires Zn(2+) as cofactor.

It is found in the cytoplasm. The catalysed reaction is 2 superoxide + 2 H(+) = H2O2 + O2. In terms of biological role, destroys radicals which are normally produced within the cells and which are toxic to biological systems. The protein is Superoxide dismutase [Cu-Zn] of Drosophila pseudoobscura pseudoobscura (Fruit fly).